Here is a 107-residue protein sequence, read N- to C-terminus: Integration host factor subunit beta (107 aa).

A disordered region spans residues Arg55–Gln107. The span at Lys65 to Asp101 shows a compositional bias: basic and acidic residues.

Belongs to the bacterial histone-like protein family. Heterodimer of an alpha and a beta chain.

Its function is as follows. This protein is one of the two subunits of integration host factor, a specific DNA-binding protein that functions in genetic recombination as well as in transcriptional and translational control. This Burkholderia pseudomallei (strain K96243) protein is Integration host factor subunit beta.